The chain runs to 629 residues: 1-deoxy-D-xylulose-5-phosphate synthase (629 aa).

Residues histidine 79 and 119-121 (SHA) each bind thiamine diphosphate. Aspartate 150 is a binding site for Mg(2+). Residues 151–152 (GS), asparagine 180, tyrosine 292, and glutamate 377 contribute to the thiamine diphosphate site. Asparagine 180 is a Mg(2+) binding site.

The protein belongs to the transketolase family. DXPS subfamily. In terms of assembly, homodimer. The cofactor is Mg(2+). It depends on thiamine diphosphate as a cofactor.

The enzyme catalyses D-glyceraldehyde 3-phosphate + pyruvate + H(+) = 1-deoxy-D-xylulose 5-phosphate + CO2. It participates in metabolic intermediate biosynthesis; 1-deoxy-D-xylulose 5-phosphate biosynthesis; 1-deoxy-D-xylulose 5-phosphate from D-glyceraldehyde 3-phosphate and pyruvate: step 1/1. Catalyzes the acyloin condensation reaction between C atoms 2 and 3 of pyruvate and glyceraldehyde 3-phosphate to yield 1-deoxy-D-xylulose-5-phosphate (DXP). The polypeptide is 1-deoxy-D-xylulose-5-phosphate synthase (Tropheryma whipplei (strain TW08/27) (Whipple's bacillus)).